Here is a 406-residue protein sequence, read N- to C-terminus: O-glycosyltransferase PaGT (406 aa).

The tract at residues 1-26 (MSPPSQIKPPQGTTPVPPSELDPRSD) is disordered.

Belongs to the afumC glycosyltransferase family.

The protein operates within mycotoxin biosynthesis. Its function is as follows. O-glycosyltransferase; part of the 2 gene clusters that mediate the biosynthesis of fusicoccins, diterpene glucosides that display phytohormone-like activity and function as potent activators of plasma membrane H(+)-ATPases in plants by modifying 14-3-3 proteins and cause the plant disease constriction canker. The first step in the pathway is performed by the fusicoccadiene synthase PaFS that possesses both prenyl transferase and terpene cyclase activity, converting isopentenyl diphosphate and dimethylallyl diphosphate into geranylgeranyl diphosphate (GGDP) and successively converting GGDP into fusicocca-2,10(14)-diene, a precursor for fusicoccin H. The second step is the oxidation at the C-8 position by the cytochrome P450 monooxygenase PaP450-2 to yield fusicocca-2,10(14)-diene-8-beta-ol. The cytochrome P450 monooxygenase PaP450-1 then catalyzes the hydroxylation at the C-16 position to produce fusicocca-2,10(14)-diene-8-beta,16-diol. The dioxygenase fc-dox then catalyzes the 16-oxydation of fusicocca-2,10(14)-diene-8-beta,16-diol to yield an aldehyde (8-beta-hydroxyfusicocca-1,10(14)-dien-16-al). The short-chain dehydrogenase/reductase fc-sdr catalyzes the reduction of the aldehyde to yield fusicocca-1,10(14)-diene-8-beta,16-diol. The next step is the hydroxylation at C-9 performed by the cytochrome P450 monooxygenase PaP450-3 that leads to fusicoccin H aglycon which is glycosylated to fusicoccin H by the O-glycosyltransferase PaGT. Hydroxylation at C-12 by the cytochrome P450 monooxygenase PaP450-4 leads then to the production of fusicoccin Q and is followed by methylation by the O-methyltransferase PaMT to yield fusicoccin P. Fusicoccin P is further converted to fusicoccin J via prenylation by the O-glucose prenyltransferase PaPT. Cytochrome P450 monooxygenase PaP450-5 then performs hydroxylation at C-19 to yield dideacetyl-fusicoccin A which is acetylated to 3'-O-deacetyl-fusicoccin A by the O-acetyltransferase PaAT-2. Finally, a another acetylation by the O-acetyltransferase PaAT-1 yields fusicoccin A. The chain is O-glycosyltransferase PaGT from Phomopsis amygdali (Fusicoccum amygdali).